Reading from the N-terminus, the 446-residue chain is uncharacterized protein (446 aa).

A disordered region spans residues 141–282 (TEAETNGTRP…GPKPKVKRVS (142 aa)). Residues 159–170 (NSGSKPKAGTQS) show a composition bias toward polar residues. Residues 194–210 (IKSERRSISQGGEKDKA) show a composition bias toward basic and acidic residues. 4 positions are modified to phosphoserine: Ser200, Ser202, Ser212, and Ser214. 2 stretches are compositionally biased toward low complexity: residues 211 to 221 (SSSSPSSSQQS) and 229 to 239 (SPSQQNSRSSS). Phosphoserine is present on Ser251. Residues 269–280 (GKSRGPKPKVKR) are compositionally biased toward basic residues. A phosphoserine mark is found at Ser282 and Ser307.

This is an uncharacterized protein from Drosophila melanogaster (Fruit fly).